Reading from the N-terminus, the 120-residue chain is cAMP-responsive element-binding protein-like 2 (120 aa).

A disordered region spans residues 1-24; sequence MDDSKVVGGKVKKPGKRGRKPAKI. Over residues 10–21 the composition is skewed to basic residues; the sequence is KVKKPGKRGRKP. The bZIP domain maps to 23 to 86; it reads KIDLKAKLER…MAMDQGKIPS (64 aa). The tract at residues 29–60 is basic motif; sequence KLERSRQSARECRARKKLRYQYLEELVSSRER. Residues 62 to 69 form a leucine-zipper region; sequence ICALREEL. The segment at 93–120 is disordered; sequence TGEEQSKSQQNSSRHMKAGKTDANSNSW.

This sequence belongs to the bZIP family. ATF subfamily. As to quaternary structure, interacts with CREB1; regulates CREB1 phosphorylation, stability and transcriptional activity. Interacts with immediate-early (IE) protein BICP22 of bovine herpesvirus-1 (BHV-1). Phosphorylated by AMPK.

Its subcellular location is the nucleus. Its function is as follows. Probable regulator of CREB1 transcriptional activity which is involved in adipose cells differentiation. May also play a regulatory role in the cell cycle. In Bos taurus (Bovine), this protein is cAMP-responsive element-binding protein-like 2 (CREBL2).